Here is an 85-residue protein sequence, read N- to C-terminus: U4-theraphotoxin-Hhn1h (85 aa).

The first 22 residues, 1–22 (MKVTLIAILTCAAVLVLHTTAA), serve as a signal peptide directing secretion. Residues 23–48 (EELEAESQLMEVGMPDTELAAVDEER) constitute a propeptide that is removed on maturation. 3 cysteine pairs are disulfide-bonded: Cys52–Cys66, Cys56–Cys77, and Cys71–Cys82.

Belongs to the neurotoxin 12 (Hwtx-2) family. 02 (Hwtx-2) subfamily. In terms of tissue distribution, expressed by the venom gland.

It is found in the secreted. Its function is as follows. Postsynaptic neurotoxin. The polypeptide is U4-theraphotoxin-Hhn1h (Cyriopagopus hainanus (Chinese bird spider)).